The primary structure comprises 873 residues: Valine--tRNA ligase (873 aa).

The 'HIGH' region signature appears at 43-53; the sequence is PNVTGVLHMGH. The 'KMSKS' region signature appears at 532 to 536; that stretch reads KMSKS. K535 provides a ligand contact to ATP. The stretch at 802-873 forms a coiled coil; the sequence is LGNLINVEEE…IEESIAALTK (72 aa).

It belongs to the class-I aminoacyl-tRNA synthetase family. ValS type 1 subfamily. As to quaternary structure, monomer.

The protein resides in the cytoplasm. The enzyme catalyses tRNA(Val) + L-valine + ATP = L-valyl-tRNA(Val) + AMP + diphosphate. Its function is as follows. Catalyzes the attachment of valine to tRNA(Val). As ValRS can inadvertently accommodate and process structurally similar amino acids such as threonine, to avoid such errors, it has a 'posttransfer' editing activity that hydrolyzes mischarged Thr-tRNA(Val) in a tRNA-dependent manner. The protein is Valine--tRNA ligase of Parabacteroides distasonis (strain ATCC 8503 / DSM 20701 / CIP 104284 / JCM 5825 / NCTC 11152).